We begin with the raw amino-acid sequence, 345 residues long: Serine/arginine-rich splicing factor 6 (345 aa).

Residues 1–72 (MPRVYIGRLS…ERVIVEHARG (72 aa)) form the RRM 1 domain. Phosphoserine occurs at positions 45, 81, and 84. The tract at residues 75–102 (RDRDGYSYGSRSGGGGYSSRRTSGRDKY) is disordered. An RRM 2 domain is found at 110 to 183 (FRLIVENLSS…RNIRLIEDKP (74 aa)). An N6-acetyllysine modification is found at K165. The disordered stretch occupies residues 176-345 (IRLIEDKPRT…RSRSRSSSRD (170 aa)). K182 is covalently cross-linked (Glycyl lysine isopeptide (Lys-Gly) (interchain with G-Cter in SUMO2)). The segment covering 185-250 (TSHRRSYSGS…RKSRSKSKSK (66 aa)) has biased composition (basic residues). Composition is skewed to basic and acidic residues over residues 264–273 (RSKDEYEKSR) and 282–293 (SPKENGKGDIKS). Phosphoserine occurs at positions 299 and 301. S305 carries the phosphoserine; by DYRK1A modification. Phosphoserine occurs at positions 316 and 318. The span at 323 to 345 (RASRSHSRSRSKSRSRSRSSSRD) shows a compositional bias: basic residues.

Belongs to the splicing factor SR family. In terms of assembly, binds SREK1/SFRS12. Interacts with DYRK1A. Extensively phosphorylated on serine residues in the RS domain. Phosphorylated by DYRK1A, probably in the RS domain. Phosphorylation by DYRK1A modulates alternative splice site selection and inhibits the expression of MAPT/Tau exon 10.

Its subcellular location is the nucleus. The protein resides in the nucleus speckle. Its function is as follows. Plays a role in constitutive splicing and modulates the selection of alternative splice sites. Plays a role in the alternative splicing of MAPT/Tau exon 10. Binds to alternative exons of TNC pre-mRNA and promotes the expression of alternatively spliced TNC. Plays a role in wound healing and in the regulation of keratinocyte differentiation and proliferation via its role in alternative splicing. This chain is Serine/arginine-rich splicing factor 6 (SRSF6), found in Bos taurus (Bovine).